We begin with the raw amino-acid sequence, 348 residues long: [LysW]-L-2-aminoadipate 6-phosphate reductase (348 aa).

14–17 lines the NADP(+) pocket; sequence SGYA. The active site involves Cys151. Asn315 lines the NADP(+) pocket.

This sequence belongs to the NAGSA dehydrogenase family. Type 1 subfamily. LysY sub-subfamily.

It localises to the cytoplasm. It carries out the reaction [amino-group carrier protein]-C-terminal-N-(1-carboxy-5-oxopentan-1-yl)-L-glutamine + phosphate + NADP(+) = [amino-group carrier protein]-C-terminal-N-(1-carboxy-5-phosphooxy-5-oxopentan-1-yl)-L-glutamine + NADPH + H(+). It functions in the pathway amino-acid biosynthesis; L-lysine biosynthesis via AAA pathway; L-lysine from L-alpha-aminoadipate (Thermus route): step 3/5. Functionally, catalyzes the NADPH-dependent reduction of [LysW]-aminoadipate 6-phosphate to yield [LysW]-aminoadipate 6-semialdehyde. This chain is [LysW]-L-2-aminoadipate 6-phosphate reductase, found in Deinococcus radiodurans (strain ATCC 13939 / DSM 20539 / JCM 16871 / CCUG 27074 / LMG 4051 / NBRC 15346 / NCIMB 9279 / VKM B-1422 / R1).